A 285-amino-acid chain; its full sequence is Shikimate dehydrogenase (NADP(+)) (285 aa).

Residues 19–21 (SLS) and threonine 66 contribute to the shikimate site. The Proton acceptor role is filled by lysine 70. Shikimate is bound by residues asparagine 91 and aspartate 107. NADP(+) is bound by residues 129–133 (GSGGA) and leucine 228. A shikimate-binding site is contributed by tyrosine 230. Glycine 251 contacts NADP(+).

The protein belongs to the shikimate dehydrogenase family. As to quaternary structure, homodimer.

It carries out the reaction shikimate + NADP(+) = 3-dehydroshikimate + NADPH + H(+). It participates in metabolic intermediate biosynthesis; chorismate biosynthesis; chorismate from D-erythrose 4-phosphate and phosphoenolpyruvate: step 4/7. Its function is as follows. Involved in the biosynthesis of the chorismate, which leads to the biosynthesis of aromatic amino acids. Catalyzes the reversible NADPH linked reduction of 3-dehydroshikimate (DHSA) to yield shikimate (SA). The polypeptide is Shikimate dehydrogenase (NADP(+)) (Prochlorococcus marinus subsp. pastoris (strain CCMP1986 / NIES-2087 / MED4)).